Here is a 390-residue protein sequence, read N- to C-terminus: Mevalonate kinase (390 aa).

ATP is bound by residues K16, S130, and 135–141 (GAGLGSS). Residues S141 and E193 each contribute to the Mg(2+) site. The Proton acceptor role is filled by D204.

It belongs to the GHMP kinase family. Mevalonate kinase subfamily. The cofactor is Mg(2+).

The protein localises to the cytoplasm. The catalysed reaction is (R)-mevalonate + ATP = (R)-5-phosphomevalonate + ADP + H(+). It participates in isoprenoid biosynthesis; isopentenyl diphosphate biosynthesis via mevalonate pathway; isopentenyl diphosphate from (R)-mevalonate: step 1/3. In terms of biological role, catalyzes the phosphorylation of mevalonate to mevalonate 5-phosphate, a key step in isoprenoid biosynthesis. The protein is Mevalonate kinase of Dictyostelium discoideum (Social amoeba).